Consider the following 207-residue polypeptide: BON1-associated protein 2 (207 aa).

Residues 1–112 form the C2 domain; sequence MSYSTFKRSL…GFAPQGHLNF (112 aa).

Interacts with BON1, BON2 and BON3. In terms of tissue distribution, expressed in roots, leaves, stems and flowers.

Its subcellular location is the membrane. Functionally, negative regulator of cell death and defense responses. Exhibits calcium-dependent phospholipid binding properties. The chain is BON1-associated protein 2 (BAP2) from Arabidopsis thaliana (Mouse-ear cress).